A 132-amino-acid polypeptide reads, in one-letter code: Small ribosomal subunit protein uS8 (132 aa).

This sequence belongs to the universal ribosomal protein uS8 family. Part of the 30S ribosomal subunit. Contacts proteins S5 and S12.

Its function is as follows. One of the primary rRNA binding proteins, it binds directly to 16S rRNA central domain where it helps coordinate assembly of the platform of the 30S subunit. The polypeptide is Small ribosomal subunit protein uS8 (Rickettsia canadensis (strain McKiel)).